The primary structure comprises 301 residues: Homoserine O-acetyltransferase (301 aa).

Cys-142 acts as the Acyl-thioester intermediate in catalysis. Substrate-binding residues include Lys-163 and Ser-192. The active-site Proton acceptor is His-235. The active site involves Glu-237. Arg-249 provides a ligand contact to substrate.

This sequence belongs to the MetA family.

It localises to the cytoplasm. It catalyses the reaction L-homoserine + acetyl-CoA = O-acetyl-L-homoserine + CoA. Its pathway is amino-acid biosynthesis; L-methionine biosynthesis via de novo pathway; O-acetyl-L-homoserine from L-homoserine: step 1/1. Its function is as follows. Transfers an acetyl group from acetyl-CoA to L-homoserine, forming acetyl-L-homoserine. The sequence is that of Homoserine O-acetyltransferase from Bacillus cereus (strain ZK / E33L).